The sequence spans 354 residues: Histidinol-phosphate aminotransferase (354 aa).

A compositionally biased stretch (basic and acidic residues) spans 1–11; the sequence is MKSFLSDKAKS. The tract at residues 1–33 is disordered; it reads MKSFLSDKAKSIEPYTPGEQPKDKNYIKLNTNE. Position 211 is an N6-(pyridoxal phosphate)lysine (lysine 211).

Belongs to the class-II pyridoxal-phosphate-dependent aminotransferase family. Histidinol-phosphate aminotransferase subfamily. As to quaternary structure, homodimer. Requires pyridoxal 5'-phosphate as cofactor.

The catalysed reaction is L-histidinol phosphate + 2-oxoglutarate = 3-(imidazol-4-yl)-2-oxopropyl phosphate + L-glutamate. It participates in amino-acid biosynthesis; L-histidine biosynthesis; L-histidine from 5-phospho-alpha-D-ribose 1-diphosphate: step 7/9. The polypeptide is Histidinol-phosphate aminotransferase (Brachyspira hyodysenteriae (strain ATCC 49526 / WA1)).